The primary structure comprises 498 residues: Galactose-1-phosphate uridylyltransferase (498 aa).

It belongs to the galactose-1-phosphate uridylyltransferase type 2 family.

Its subcellular location is the cytoplasm. The enzyme catalyses alpha-D-galactose 1-phosphate + UDP-alpha-D-glucose = alpha-D-glucose 1-phosphate + UDP-alpha-D-galactose. It participates in carbohydrate metabolism; galactose metabolism. This Staphylococcus carnosus (strain TM300) protein is Galactose-1-phosphate uridylyltransferase.